The chain runs to 225 residues: Glutathione S-transferase U2 (225 aa).

Residues 6-85 (ESVKLLGFWI…YIDQTWNNNP (80 aa)) enclose the GST N-terminal domain. Glutathione contacts are provided by residues 16-17 (SP), 42-43 (KK), 56-57 (KV), and 69-70 (ES). A GST C-terminal domain is found at 90–217 (DPYEKAMVRF…EKHIERMKKI (128 aa)). Position 151 is a phosphothreonine (Thr-151).

It belongs to the GST superfamily. Tau family.

The protein localises to the cytoplasm. It is found in the cytosol. It carries out the reaction RX + glutathione = an S-substituted glutathione + a halide anion + H(+). Its function is as follows. May be involved in the conjugation of reduced glutathione to a wide number of exogenous and endogenous hydrophobic electrophiles and have a detoxification role against certain herbicides. The polypeptide is Glutathione S-transferase U2 (GSTU2) (Arabidopsis thaliana (Mouse-ear cress)).